The sequence spans 296 residues: Tyrosine recombinase XerC (296 aa).

Residues 1 to 84 (MDKIQETFLY…TLRTFYEFWM (84 aa)) form the Core-binding (CB) domain. Positions 105 to 286 (YLPQFFYEEE…SNQQLRKVYL (182 aa)) constitute a Tyr recombinase domain. Catalysis depends on residues R145, K169, H238, R241, and H264. Y273 (O-(3'-phospho-DNA)-tyrosine intermediate) is an active-site residue.

The protein belongs to the 'phage' integrase family. XerC subfamily. As to quaternary structure, forms a cyclic heterotetrameric complex composed of two molecules of XerC and two molecules of XerD.

The protein localises to the cytoplasm. Functionally, site-specific tyrosine recombinase, which acts by catalyzing the cutting and rejoining of the recombining DNA molecules. The XerC-XerD complex is essential to convert dimers of the bacterial chromosome into monomers to permit their segregation at cell division. It also contributes to the segregational stability of plasmids. The polypeptide is Tyrosine recombinase XerC (Staphylococcus epidermidis (strain ATCC 35984 / DSM 28319 / BCRC 17069 / CCUG 31568 / BM 3577 / RP62A)).